The sequence spans 202 residues: Na(+)-translocating NADH-quinone reductase subunit E (202 aa).

6 helical membrane-spanning segments follow: residues 11–31 (AVFI…FLAV), 39–59 (FGLG…NNLI), 81–101 (FLKF…LEMA), 114–134 (GIFL…AFMV), 144–164 (VVFG…LAAV), and 180–200 (LGIT…FSGV).

The protein belongs to the NqrDE/RnfAE family. In terms of assembly, composed of six subunits; NqrA, NqrB, NqrC, NqrD, NqrE and NqrF.

The protein resides in the cell inner membrane. It carries out the reaction a ubiquinone + n Na(+)(in) + NADH + H(+) = a ubiquinol + n Na(+)(out) + NAD(+). Functionally, NQR complex catalyzes the reduction of ubiquinone-1 to ubiquinol by two successive reactions, coupled with the transport of Na(+) ions from the cytoplasm to the periplasm. NqrA to NqrE are probably involved in the second step, the conversion of ubisemiquinone to ubiquinol. The sequence is that of Na(+)-translocating NADH-quinone reductase subunit E from Idiomarina loihiensis (strain ATCC BAA-735 / DSM 15497 / L2-TR).